The sequence spans 62 residues: MATCSICGKRAVTGNQVSHSNIKTKRTWAPNLQRVKLLVNGTPRRAYVCTRCLRSGKVQRAI.

This sequence belongs to the bacterial ribosomal protein bL28 family.

In Moorella thermoacetica (strain ATCC 39073 / JCM 9320), this protein is Large ribosomal subunit protein bL28.